Here is a 429-residue protein sequence, read N- to C-terminus: Glucose-6-phosphate exchanger SLC37A4 (429 aa).

The next 10 membrane-spanning stretches (helical) occupy residues 84–104 (LLLV…PVFA), 105–125 (ALWF…GKVL), 139–159 (AILS…ATIL), 167–187 (STLA…LLLI), 219–239 (ELLL…VFGV), 260–280 (LVGS…SIAA), 302–322 (GLLL…RVTV), 329–349 (LWIL…IALF), 368–388 (IVGL…STIA), and 394–414 (STAF…FFLL).

This sequence belongs to the major facilitator superfamily. Organophosphate:Pi antiporter (OPA) (TC 2.A.1.4) family. As to expression, mostly expressed in liver and kidney.

It localises to the endoplasmic reticulum membrane. The catalysed reaction is D-glucose 6-phosphate(in) + phosphate(out) = D-glucose 6-phosphate(out) + phosphate(in). Its activity is regulated as follows. Inhibited by vanadate and chlorogenic acid. In terms of biological role, inorganic phosphate and glucose-6-phosphate antiporter of the endoplasmic reticulum. Transports cytoplasmic glucose-6-phosphate into the lumen of the endoplasmic reticulum and translocates inorganic phosphate into the opposite direction. Forms with glucose-6-phosphatase the complex responsible for glucose production through glycogenolysis and gluconeogenesis. Hence, it plays a central role in homeostatic regulation of blood glucose levels. The sequence is that of Glucose-6-phosphate exchanger SLC37A4 from Homo sapiens (Human).